The following is a 385-amino-acid chain: S-adenosylmethionine synthase (385 aa).

His15 is an ATP binding site. Asp17 is a binding site for Mg(2+). Glu43 contacts K(+). 2 residues coordinate L-methionine: Glu56 and Gln99. The flexible loop stretch occupies residues 99–109 (QSPEIAQGVDE). ATP contacts are provided by residues 164-166 (DAK), 230-231 (RF), Asp239, 245-246 (RK), Ala262, and Lys266. Asp239 contributes to the L-methionine binding site. An L-methionine-binding site is contributed by Lys270.

It belongs to the AdoMet synthase family. In terms of assembly, homotetramer; dimer of dimers. Requires Mg(2+) as cofactor. K(+) is required as a cofactor.

Its subcellular location is the cytoplasm. It catalyses the reaction L-methionine + ATP + H2O = S-adenosyl-L-methionine + phosphate + diphosphate. The protein operates within amino-acid biosynthesis; S-adenosyl-L-methionine biosynthesis; S-adenosyl-L-methionine from L-methionine: step 1/1. Catalyzes the formation of S-adenosylmethionine (AdoMet) from methionine and ATP. The overall synthetic reaction is composed of two sequential steps, AdoMet formation and the subsequent tripolyphosphate hydrolysis which occurs prior to release of AdoMet from the enzyme. The protein is S-adenosylmethionine synthase of Hydrogenovibrio crunogenus (strain DSM 25203 / XCL-2) (Thiomicrospira crunogena).